The primary structure comprises 331 residues: uncharacterized protein (331 aa).

The protein to bacterial alkanal monooxygenase alpha and beta chains.

This is an uncharacterized protein from Bacillus subtilis (strain 168).